Here is a 227-residue protein sequence, read N- to C-terminus: Fibrillarin-like rRNA/tRNA 2'-O-methyltransferase (227 aa).

Residues 82 to 83 (TT), 100 to 101 (EF), 125 to 126 (DA), and 145 to 148 (DVAQ) contribute to the S-adenosyl-L-methionine site.

This sequence belongs to the methyltransferase superfamily. Fibrillarin family. Interacts with nop5. Component of box C/D small ribonucleoprotein (sRNP) particles that contain rpl7ae, FlpA and nop5, plus a guide RNA.

Involved in pre-rRNA and tRNA processing. Utilizes the methyl donor S-adenosyl-L-methionine to catalyze the site-specific 2'-hydroxyl methylation of ribose moieties in rRNA and tRNA. Site specificity is provided by a guide RNA that base pairs with the substrate. Methylation occurs at a characteristic distance from the sequence involved in base pairing with the guide RNA. The polypeptide is Fibrillarin-like rRNA/tRNA 2'-O-methyltransferase (Methanosarcina mazei (strain ATCC BAA-159 / DSM 3647 / Goe1 / Go1 / JCM 11833 / OCM 88) (Methanosarcina frisia)).